Here is a 425-residue protein sequence, read N- to C-terminus: Tol-Pal system protein TolB (425 aa).

An N-terminal signal peptide occupies residues 1-22 (MRNFLYCTGVLLLLWMSTSSQA).

The protein belongs to the TolB family. As to quaternary structure, the Tol-Pal system is composed of five core proteins: the inner membrane proteins TolA, TolQ and TolR, the periplasmic protein TolB and the outer membrane protein Pal. They form a network linking the inner and outer membranes and the peptidoglycan layer.

It localises to the periplasm. Part of the Tol-Pal system, which plays a role in outer membrane invagination during cell division and is important for maintaining outer membrane integrity. The polypeptide is Tol-Pal system protein TolB (Nitrosomonas europaea (strain ATCC 19718 / CIP 103999 / KCTC 2705 / NBRC 14298)).